The following is a 338-amino-acid chain: uncharacterized protein (338 aa).

The TNase-like domain occupies 144-321 (HTLPVDVKAV…RAARVGLWAS (178 aa)). Catalysis depends on residues R228, E236, and R270.

This is an uncharacterized protein from Capnoides sempervirens (Rock-harlequin).